The following is a 254-amino-acid chain: Putative biopolymer transport protein ExbB-like 1 (254 aa).

Helical transmembrane passes span 39-59 (GGVV…TAFE), 141-161 (LETI…TGLI), and 185-205 (IGEA…ALLV).

The protein belongs to the ExbB/TolQ family.

It localises to the cell inner membrane. Functionally, involved in the TonB-dependent energy-dependent transport of various receptor-bound substrates. Protects ExbD from proteolytic degradation and functionally stabilizes TonB. The sequence is that of Putative biopolymer transport protein ExbB-like 1 from Synechocystis sp. (strain ATCC 27184 / PCC 6803 / Kazusa).